Reading from the N-terminus, the 481-residue chain is Eukaryotic translation initiation factor 3 subunit L (481 aa).

The disordered stretch occupies residues 1–22 (MSVDARTAYPGSRPPANMQDES). The region spanning 262–457 (DAIRTFSHIL…DLDYAIEGNL (196 aa)) is the PCI domain.

The protein belongs to the eIF-3 subunit L family. In terms of assembly, component of the eukaryotic translation initiation factor 3 (eIF-3) complex.

The protein localises to the cytoplasm. In terms of biological role, component of the eukaryotic translation initiation factor 3 (eIF-3) complex, which is involved in protein synthesis of a specialized repertoire of mRNAs and, together with other initiation factors, stimulates binding of mRNA and methionyl-tRNAi to the 40S ribosome. The eIF-3 complex specifically targets and initiates translation of a subset of mRNAs involved in cell proliferation. This Coccidioides immitis (strain RS) (Valley fever fungus) protein is Eukaryotic translation initiation factor 3 subunit L.